The sequence spans 176 residues: Adenine phosphoribosyltransferase (176 aa).

The protein belongs to the purine/pyrimidine phosphoribosyltransferase family. Homodimer.

Its subcellular location is the cytoplasm. The enzyme catalyses AMP + diphosphate = 5-phospho-alpha-D-ribose 1-diphosphate + adenine. The protein operates within purine metabolism; AMP biosynthesis via salvage pathway; AMP from adenine: step 1/1. Catalyzes a salvage reaction resulting in the formation of AMP, that is energically less costly than de novo synthesis. The chain is Adenine phosphoribosyltransferase from Gluconacetobacter diazotrophicus (strain ATCC 49037 / DSM 5601 / CCUG 37298 / CIP 103539 / LMG 7603 / PAl5).